The sequence spans 378 residues: Cytochrome b (378 aa).

4 helical membrane passes run 34 to 54, 78 to 99, 114 to 134, and 179 to 199; these read FGSL…FLAM, WLLR…YLHV, WLIG…GYVL, and FFTF…IHLL. Residues H84 and H98 each coordinate heme b. Heme b is bound by residues H183 and H197. Residue H202 coordinates a ubiquinone. 4 consecutive transmembrane segments (helical) span residues 227–247, 289–309, 321–341, and 348–368; these read FKDI…VLIS, LGGV…PFYN, INQV…WIGA, and YVLI…VNPL.

This sequence belongs to the cytochrome b family. The main subunits of complex b-c1 are: cytochrome b, cytochrome c1 and the Rieske protein. Heme b serves as cofactor.

Its subcellular location is the mitochondrion inner membrane. In terms of biological role, component of the ubiquinol-cytochrome c reductase complex (complex III or cytochrome b-c1 complex) that is part of the mitochondrial respiratory chain. The b-c1 complex mediates electron transfer from ubiquinol to cytochrome c. Contributes to the generation of a proton gradient across the mitochondrial membrane that is then used for ATP synthesis. The polypeptide is Cytochrome b (mt:Cyt-b) (Drosophila melanogaster (Fruit fly)).